The following is a 370-amino-acid chain: Putative glutamate--cysteine ligase 2 (370 aa).

This sequence belongs to the glutamate--cysteine ligase type 2 family. YbdK subfamily.

It catalyses the reaction L-cysteine + L-glutamate + ATP = gamma-L-glutamyl-L-cysteine + ADP + phosphate + H(+). ATP-dependent carboxylate-amine ligase which exhibits weak glutamate--cysteine ligase activity. The chain is Putative glutamate--cysteine ligase 2 from Janthinobacterium sp. (strain Marseille) (Minibacterium massiliensis).